The following is a 308-amino-acid chain: Protein translocase subunit SecF (308 aa).

Helical transmembrane passes span 10-30, 129-149, 160-180, 181-201, 241-261, and 264-284; these read LFFAISLAMIIPGLIVMAIFG, LAVSIAALAVIIYITWAFRGV, IIAMIHDVLVVISLVSIGGVL, FGWQVDALFLTALLSVIGFSV, TQLMTVEYMLLAIALFGGITL, and FAIILLVGLFMGTYSSIFIAA.

The protein belongs to the SecD/SecF family. SecF subfamily. As to quaternary structure, forms a complex with SecD. Part of the essential Sec protein translocation apparatus which comprises SecA, SecYEG and auxiliary proteins SecDF. Other proteins may also be involved.

The protein localises to the cell membrane. Functionally, part of the Sec protein translocase complex. Interacts with the SecYEG preprotein conducting channel. SecDF uses the proton motive force (PMF) to complete protein translocation after the ATP-dependent function of SecA. The protein is Protein translocase subunit SecF of Anaerolinea thermophila (strain DSM 14523 / JCM 11388 / NBRC 100420 / UNI-1).